The following is a 134-amino-acid chain: uncharacterized protein (134 aa).

The helical transmembrane segment at 110–130 (SLGVLTDILFLVLYSLLIHLS) threads the bilayer.

The protein resides in the membrane. This is an uncharacterized protein from Saccharomyces cerevisiae (strain ATCC 204508 / S288c) (Baker's yeast).